Reading from the N-terminus, the 159-residue chain is Fatty acid-binding protein homolog 1 (159 aa).

A signal peptide spans M1 to A17.

The protein belongs to the calycin superfamily. Fatty-acid binding protein (FABP) family. As to expression, first detected in hypodermal precursor cells at the time of gastrulation. From the two-fold stage through to three-fold stages, expression is localized exclusively to hyp-7 but disappears in newly hatched L1s and subsequent developmental stages. Expression from L1 to adult stages is found in a single neuron in the ventral cord with a process into the nerve ring.

The protein resides in the secreted. Functionally, may play a role in sequestering potentially toxic fatty acids and their peroxidation products, or it may be involved in the maintenance of the impermeable lipid layer of the eggshell. The polypeptide is Fatty acid-binding protein homolog 1 (lbp-1) (Caenorhabditis elegans).